Consider the following 334-residue polypeptide: Probable tRNA pseudouridine synthase B (334 aa).

The active-site Nucleophile is D82. The PUA domain occupies 250-325; it reads LPKVWIRDSA…IAVDVDKVFM (76 aa).

This sequence belongs to the pseudouridine synthase TruB family. Type 2 subfamily.

The catalysed reaction is uridine(55) in tRNA = pseudouridine(55) in tRNA. Could be responsible for synthesis of pseudouridine from uracil-55 in the psi GC loop of transfer RNAs. In Thermococcus gammatolerans (strain DSM 15229 / JCM 11827 / EJ3), this protein is Probable tRNA pseudouridine synthase B.